Reading from the N-terminus, the 107-residue chain is UPF0145 protein PM1668 (107 aa).

This sequence belongs to the UPF0145 family.

This is UPF0145 protein PM1668 from Pasteurella multocida (strain Pm70).